Consider the following 257-residue polypeptide: TLC domain-containing protein 3A (257 aa).

7 consecutive transmembrane segments (helical) span residues 1–21 (MLLT…LCTW), 42–62 (LVSS…IRSC), 77–97 (VWFL…CEWC), 113–135 (FLSR…VPVA), 142–162 (LGDF…FVSL), 181–201 (GILT…FMYW), and 220–240 (FYCN…FCLL). A TLC domain is found at 33–249 (TDCVMISTRL…LCRKAVRLFD (217 aa)).

In terms of assembly, interacts with GGT7 isoform 3 and SLC3A2. Highly expressed in pancreas. Detected at intermediate levels in heart, placenta and kidney, and at low levels in brain, liver and skeletal muscle. Not detected in normal lung.

Its subcellular location is the cell membrane. The chain is TLC domain-containing protein 3A from Homo sapiens (Human).